The following is a 229-amino-acid chain: Phosphoglycolate phosphatase (229 aa).

The Nucleophile role is filled by D18. Mg(2+) contacts are provided by D18, D20, and D176.

The protein belongs to the HAD-like hydrolase superfamily. CbbY/CbbZ/Gph/YieH family. Mg(2+) serves as cofactor.

The enzyme catalyses 2-phosphoglycolate + H2O = glycolate + phosphate. Its pathway is organic acid metabolism; glycolate biosynthesis; glycolate from 2-phosphoglycolate: step 1/1. In terms of biological role, specifically catalyzes the dephosphorylation of 2-phosphoglycolate. Is involved in the dissimilation of the intracellular 2-phosphoglycolate formed during the DNA repair of 3'-phosphoglycolate ends, a major class of DNA lesions induced by oxidative stress. The chain is Phosphoglycolate phosphatase from Xylella fastidiosa (strain Temecula1 / ATCC 700964).